The following is a 346-amino-acid chain: Ion-translocating oxidoreductase complex subunit D (346 aa).

4 helical membrane-spanning segments follow: residues 20 to 40, 42 to 62, 69 to 91, and 120 to 140; these read IMIQVMLACLPGLMALTTFFG, GIIIQLVIACVTALVAEGVVL, LASRLGDGSALLTALLLALSLPP, and PFNPAMVGYVVLLISFPVQMT. T187 carries the FMN phosphoryl threonine modification. 5 helical membrane passes run 212–232, 242–262, 264–284, 290–310, and 314–334; these read ASAGWTWANIGFLLGGLYLIW, LSLLAAMLIGAGLGHWLAPVV, APPLLHLFSGATMLGAFFIAT, AATVRGRVIFGALTGLLVWLI, and GGYPDGVAFAVLLANICVPLI.

The protein belongs to the NqrB/RnfD family. The complex is composed of six subunits: RnfA, RnfB, RnfC, RnfD, RnfE and RnfG. FMN serves as cofactor.

The protein resides in the cell inner membrane. Part of a membrane-bound complex that couples electron transfer with translocation of ions across the membrane. The sequence is that of Ion-translocating oxidoreductase complex subunit D from Sodalis glossinidius (strain morsitans).